Here is a 1019-residue protein sequence, read N- to C-terminus: Outer capsid protein P3 (1019 aa).

It belongs to the phytoreovirus inner capsid protein P3 family. In terms of assembly, homodimer. Homomultimer.

The protein localises to the virion. Its subcellular location is the host cytoplasm. In terms of biological role, capsid protein which self-assembles to form the inner icosahedral capsid with a T=2 symmetry, and consisting of 60 P3 dimers. This Alopecurus aequalis (Barnyard grass) protein is Outer capsid protein P3.